We begin with the raw amino-acid sequence, 295 residues long: Ethanolamine ammonia-lyase small subunit (295 aa).

Adenosylcob(III)alamin-binding residues include V207, E228, and C258.

Belongs to the EutC family. As to quaternary structure, the basic unit is a heterodimer which dimerizes to form tetramers. The heterotetramers trimerize; 6 large subunits form a core ring with 6 small subunits projecting outwards. It depends on adenosylcob(III)alamin as a cofactor.

It localises to the bacterial microcompartment. It carries out the reaction ethanolamine = acetaldehyde + NH4(+). The protein operates within amine and polyamine degradation; ethanolamine degradation. Functionally, catalyzes the deamination of various vicinal amino-alcohols to oxo compounds. Allows this organism to utilize ethanolamine as the sole source of nitrogen and carbon in the presence of external vitamin B12. This chain is Ethanolamine ammonia-lyase small subunit, found in Escherichia fergusonii (strain ATCC 35469 / DSM 13698 / CCUG 18766 / IAM 14443 / JCM 21226 / LMG 7866 / NBRC 102419 / NCTC 12128 / CDC 0568-73).